The primary structure comprises 311 residues: Olfactory receptor 5L2 (311 aa).

The Extracellular segment spans residues 1-25 (MGKENCTTVAEFILLGLSDVPELRV). Residue asparagine 5 is glycosylated (N-linked (GlcNAc...) asparagine). Residues 26–46 (CLFLLFLLIYGVTLLANLGMT) traverse the membrane as a helical segment. Residues 47–54 (ALIQVSSR) are Cytoplasmic-facing. A helical transmembrane segment spans residues 55-75 (LHTPVYFFLSHLSFVDFCYSS). Residues 76–99 (IIVPKMLANIFNKDKAISFLGCMV) lie on the Extracellular side of the membrane. Cysteine 97 and cysteine 189 are oxidised to a cystine. A helical transmembrane segment spans residues 100-120 (QFYLFCTCGVTEVFLLAVMAY). Over 121–139 (DRFVAICNPLLYMVTMSQK) the chain is Cytoplasmic. The chain crosses the membrane as a helical span at residues 140–160 (LRVELTSCCYFCGTVCSLIHS). Over 161–196 (SLALRILFYRSNVINHFFCDLPPLLSLACSDVTVNE) the chain is Extracellular. N-linked (GlcNAc...) asparagine glycosylation is present at asparagine 195. Residues 197–217 (TLLFLVATLNESVTIMIILTS) form a helical membrane-spanning segment. The Cytoplasmic segment spans residues 218 to 237 (YLLILTTILKIHSAESRHKA). The helical transmembrane segment at 238–258 (FSTCASHLTAITVSHGTILYI) threads the bilayer. At 259-271 (YCRPSSGNSGDVD) the chain is on the extracellular side. Residues 272–292 (KVATVFYTVVIPMLNPLIYSL) form a helical membrane-spanning segment. Topologically, residues 293–311 (RNKDVNKALRKVMGSKIHS) are cytoplasmic.

This sequence belongs to the G-protein coupled receptor 1 family.

The protein localises to the cell membrane. In terms of biological role, odorant receptor. This chain is Olfactory receptor 5L2 (OR5L2), found in Homo sapiens (Human).